The following is a 72-amino-acid chain: MTKKAKNVEKVPFEDAMKRLEEIIDLMNQPTTALEASLALYEEADQLMRICESRIQEVEARIKQLSDQRSES.

It belongs to the XseB family. In terms of assembly, heterooligomer composed of large and small subunits.

It localises to the cytoplasm. The enzyme catalyses Exonucleolytic cleavage in either 5'- to 3'- or 3'- to 5'-direction to yield nucleoside 5'-phosphates.. Functionally, bidirectionally degrades single-stranded DNA into large acid-insoluble oligonucleotides, which are then degraded further into small acid-soluble oligonucleotides. In Chlamydia muridarum (strain MoPn / Nigg), this protein is Exodeoxyribonuclease 7 small subunit.